The chain runs to 359 residues: Putative nucleotidyltransferase MAB21L1 (359 aa).

Residues 23 to 24 (RK) and 63 to 66 (YEGL) contribute to the a ribonucleoside 5'-triphosphate site. Mg(2+)-binding residues include Glu73 and Glu75. A ribonucleoside 5'-triphosphate-binding positions include Lys248 and 252-255 (SILK).

It belongs to the mab-21 family. Monomer. Homodecamer; composed of 2 back to back homopentamers. The protein may exist as monomer in solution and oiligomerizes upon ligand binding.

The protein resides in the nucleus. Putative nucleotidyltransferase required for several aspects of embryonic development including normal development of the eye. It is unclear whether it displays nucleotidyltransferase activity in vivo. Binds single-stranded RNA (ssRNA). The protein is Putative nucleotidyltransferase MAB21L1 (MAB21L1) of Bos taurus (Bovine).